The following is a 416-amino-acid chain: Advanced glycosylation end product-specific receptor (416 aa).

An N-terminal signal peptide occupies residues 1-22 (MAAGAVVGAWMLVLSLGGTVTG). The Ig-like V-type domain occupies 23–115 (DQNITARIGK…KETKSNYRVR (93 aa)). Over 23–352 (DQNITARIGK…VEGPGLETLA (330 aa)) the chain is Extracellular. N-linked (GlcNAc...) asparagine glycosylation is found at N25 and N80. Intrachain disulfides connect C38/C98 and C143/C207. Ig-like C2-type domains lie at 123–220 (PEIV…RALH) and 238–327 (PNVD…RAVS). Residues 353-373 (LTLGILGGLGTVALLIGVIVW) traverse the membrane as a helical segment. Topologically, residues 374–416 (HRRRQRKGQERKVPENQEEEEEERAELNQPEEPEAAESSTGGP) are cytoplasmic. Positions 377-416 (RQRKGQERKVPENQEEEEEERAELNQPEEPEAAESSTGGP) are disordered. Residues 389–408 (NQEEEEEERAELNQPEEPEA) are compositionally biased toward acidic residues.

As to quaternary structure, constitutive homodimer; disulfide-linked. Forms homooligomers. Interacts with S100A1 and APP. Interacts with S100B, S100A12 and S100A14. Interacts with TIRAP. Interacts with HMGB1. Interacts with LGP2; this interaction plays an important role in AGER-mediated pro-inflammatory responses and cytokine release. Interacts with double-strand break repair protein MRE11 which is a core component of the MRN complex; the interaction enhances MRE11 endonuclease activity and promotes DNA repair. Interacts with the MCM2-7 complex via interaction with complex member MCM2; the interaction is increased following DNA replication stress and stabilizes the MCM2-7 complex at replication forks. In terms of processing, phosphorylated on its cytoplasmic domain by PKCzeta/PRKCZ upon ligand binding. Phosphorylated by ATM following DNA damage. Post-translationally, targeted by the ubiquitin E3 ligase subunit FBXO10 to mediate its ubiquitination and degradation. In terms of tissue distribution, endothelial cells.

It localises to the cell membrane. It is found in the cell projection. The protein resides in the phagocytic cup. Its subcellular location is the early endosome. The protein localises to the nucleus. In terms of biological role, cell surface pattern recognition receptor that senses endogenous stress signals with a broad ligand repertoire including advanced glycation end products, S100 proteins, high-mobility group box 1 protein/HMGB1, amyloid beta/APP oligomers, nucleic acids, histones, phospholipids and glycosaminoglycans. Advanced glycosylation end products are nonenzymatically glycosylated proteins which accumulate in vascular tissue in aging and at an accelerated rate in diabetes. These ligands accumulate at inflammatory sites during the pathogenesis of various diseases including diabetes, vascular complications, neurodegenerative disorders and cancers, and RAGE transduces their binding into pro-inflammatory responses. Upon ligand binding, uses TIRAP and MYD88 as adapters to transduce the signal ultimately leading to the induction of inflammatory cytokines IL6, IL8 and TNFalpha through activation of NF-kappa-B. Interaction with S100A12 on endothelium, mononuclear phagocytes, and lymphocytes triggers cellular activation, with generation of key pro-inflammatory mediators. Interaction with S100B after myocardial infarction may play a role in myocyte apoptosis by activating ERK1/2 and p53/TP53 signaling. Contributes to the translocation of amyloid-beta peptide (ABPP) across the cell membrane from the extracellular to the intracellular space in cortical neurons. ABPP-initiated RAGE signaling, especially stimulation of p38 mitogen-activated protein kinase (MAPK), has the capacity to drive a transport system delivering ABPP as a complex with RAGE to the intraneuronal space. Participates in endothelial albumin transcytosis together with HMGB1 through the RAGE/SRC/Caveolin-1 pathway, leading to endothelial hyperpermeability. Mediates the loading of HMGB1 in extracellular vesicles (EVs) that shuttle HMGB1 to hepatocytes by transferrin-mediated endocytosis and subsequently promote hepatocyte pyroptosis by activating the NLRP3 inflammasome. Binds to DNA and promotes extracellular hypomethylated DNA (CpG DNA) uptake by cells via the endosomal route to activate inflammatory responses. Mediates phagocytosis by non-professional phagocytes (NPP) and this is enhanced by binding to ligands including RNA, DNA, HMGB1 and histones. Promotes NPP-mediated phagocytosis of Saccharomyces cerevisiae spores by binding to RNA attached to the spore wall. Also promotes NPP-mediated phagocytosis of apoptotic cells. Following DNA damage, recruited to DNA double-strand break sites where it colocalizes with the MRN repair complex via interaction with double-strand break repair protein MRE11. Enhances the endonuclease activity of MRE11, promoting the end resection of damaged DNA. Promotes DNA damage repair in trophoblasts which enhances trophoblast invasion and contributes to placental development and maintenance. Protects cells from DNA replication stress by localizing to damaged replication forks where it stabilizes the MCM2-7 complex and promotes faithful progression of the replication fork. The polypeptide is Advanced glycosylation end product-specific receptor (AGER) (Bos taurus (Bovine)).